The sequence spans 344 residues: UDP-3-O-acylglucosamine N-acyltransferase (344 aa).

The Proton acceptor role is filled by histidine 250.

The protein belongs to the transferase hexapeptide repeat family. LpxD subfamily. In terms of assembly, homotrimer.

The catalysed reaction is a UDP-3-O-[(3R)-3-hydroxyacyl]-alpha-D-glucosamine + a (3R)-hydroxyacyl-[ACP] = a UDP-2-N,3-O-bis[(3R)-3-hydroxyacyl]-alpha-D-glucosamine + holo-[ACP] + H(+). It participates in bacterial outer membrane biogenesis; LPS lipid A biosynthesis. Its function is as follows. Catalyzes the N-acylation of UDP-3-O-acylglucosamine using 3-hydroxyacyl-ACP as the acyl donor. Is involved in the biosynthesis of lipid A, a phosphorylated glycolipid that anchors the lipopolysaccharide to the outer membrane of the cell. The protein is UDP-3-O-acylglucosamine N-acyltransferase of Maricaulis maris (strain MCS10) (Caulobacter maris).